The primary structure comprises 123 residues: Mediator of RNA polymerase II transcription subunit 9 (123 aa).

Residues 95–123 are a coiled coil; that stretch reads WQLHIQEKKIELEKKTKHLQRLRESIQKQ.

Belongs to the Mediator complex subunit 9 family. Component of the Mediator complex.

The protein resides in the nucleus. In terms of biological role, component of the Mediator complex, a coactivator involved in the regulated transcription of nearly all RNA polymerase II-dependent genes. Mediator functions as a bridge to convey information from gene-specific regulatory proteins to the basal RNA polymerase II transcription machinery. Mediator is recruited to promoters by direct interactions with regulatory proteins and serves as a scaffold for the assembly of a functional preinitiation complex with RNA polymerase II and the general transcription factors. This chain is Mediator of RNA polymerase II transcription subunit 9 (CSE2), found in Kluyveromyces lactis (strain ATCC 8585 / CBS 2359 / DSM 70799 / NBRC 1267 / NRRL Y-1140 / WM37) (Yeast).